A 214-amino-acid polypeptide reads, in one-letter code: Pyridoxine/pyridoxamine 5'-phosphate oxidase (214 aa).

Substrate-binding positions include 8–11 and K66; that span reads RTNY. Residues 61 to 66, 76 to 77, R82, K83, and Q105 each bind FMN; these read RIVLIK and FT. Residues Y123, R127, and S131 each contribute to the substrate site. FMN is bound by residues 140–141 and W184; that span reads QS. 190-192 contacts substrate; sequence RLH. Residue R194 participates in FMN binding.

The protein belongs to the pyridoxamine 5'-phosphate oxidase family. In terms of assembly, homodimer. FMN is required as a cofactor.

It carries out the reaction pyridoxamine 5'-phosphate + O2 + H2O = pyridoxal 5'-phosphate + H2O2 + NH4(+). The enzyme catalyses pyridoxine 5'-phosphate + O2 = pyridoxal 5'-phosphate + H2O2. Its pathway is cofactor metabolism; pyridoxal 5'-phosphate salvage; pyridoxal 5'-phosphate from pyridoxamine 5'-phosphate: step 1/1. It participates in cofactor metabolism; pyridoxal 5'-phosphate salvage; pyridoxal 5'-phosphate from pyridoxine 5'-phosphate: step 1/1. In terms of biological role, catalyzes the oxidation of either pyridoxine 5'-phosphate (PNP) or pyridoxamine 5'-phosphate (PMP) into pyridoxal 5'-phosphate (PLP). The protein is Pyridoxine/pyridoxamine 5'-phosphate oxidase of Burkholderia thailandensis (strain ATCC 700388 / DSM 13276 / CCUG 48851 / CIP 106301 / E264).